The sequence spans 354 residues: DNA polymerase IV (354 aa).

Residues 6–187 (IIHVDCDCFY…LPVARLHGVG (182 aa)) form the UmuC domain. Positions 10 and 105 each coordinate Mg(2+). Glu-106 is a catalytic residue.

Belongs to the DNA polymerase type-Y family. In terms of assembly, monomer. The cofactor is Mg(2+).

The protein localises to the cytoplasm. The enzyme catalyses DNA(n) + a 2'-deoxyribonucleoside 5'-triphosphate = DNA(n+1) + diphosphate. Its function is as follows. Poorly processive, error-prone DNA polymerase involved in untargeted mutagenesis. Copies undamaged DNA at stalled replication forks, which arise in vivo from mismatched or misaligned primer ends. These misaligned primers can be extended by PolIV. Exhibits no 3'-5' exonuclease (proofreading) activity. May be involved in translesional synthesis, in conjunction with the beta clamp from PolIII. In Pseudomonas putida (strain GB-1), this protein is DNA polymerase IV.